A 515-amino-acid polypeptide reads, in one-letter code: 2,3-bisphosphoglycerate-independent phosphoglycerate mutase (515 aa).

Residues aspartate 17 and serine 67 each contribute to the Mn(2+) site. The Phosphoserine intermediate role is filled by serine 67. Substrate contacts are provided by residues histidine 128, 157-158, arginine 190, arginine 196, 262-265, and lysine 336; these read RD and RADR. Mn(2+) is bound by residues aspartate 403, histidine 407, aspartate 444, histidine 445, and histidine 463.

Belongs to the BPG-independent phosphoglycerate mutase family. Monomer. It depends on Mn(2+) as a cofactor.

The catalysed reaction is (2R)-2-phosphoglycerate = (2R)-3-phosphoglycerate. It functions in the pathway carbohydrate degradation; glycolysis; pyruvate from D-glyceraldehyde 3-phosphate: step 3/5. Its function is as follows. Catalyzes the interconversion of 2-phosphoglycerate and 3-phosphoglycerate. In Acinetobacter baylyi (strain ATCC 33305 / BD413 / ADP1), this protein is 2,3-bisphosphoglycerate-independent phosphoglycerate mutase.